A 347-amino-acid polypeptide reads, in one-letter code: MVRISLDVMGGDYGPEVVIPGAARALERHPDIKFVLFGQEARCAELLAKYPKLQASSTFHDCEIAVGMDEKPSQALRRGRGKSTMWKAIDAINADEADVVVSAGNTGALMAMSVFCLRTMQGIQRPAIAAIWPTLKGESIVLDVGATIGADAQQLMDFALMGGAMARALFEVERPSVGLLNVGVEEIKGQEEVKEAGRLIREANIEGIEYYGFVEGDDIGRGTVDVVVTEGFSGNIALKAAEGTARQIAEYLRSAMSRTLLAKIGYIFAKGAFDRLREKMDPRKVNGGVFLGLNGVVIKSHGGTDAEGFAAAIDVGYDMVKNGLKAKIEADLARYHGAEPTEALPPA.

This sequence belongs to the PlsX family. As to quaternary structure, homodimer. Probably interacts with PlsY.

It localises to the cytoplasm. The catalysed reaction is a fatty acyl-[ACP] + phosphate = an acyl phosphate + holo-[ACP]. It participates in lipid metabolism; phospholipid metabolism. In terms of biological role, catalyzes the reversible formation of acyl-phosphate (acyl-PO(4)) from acyl-[acyl-carrier-protein] (acyl-ACP). This enzyme utilizes acyl-ACP as fatty acyl donor, but not acyl-CoA. The chain is Phosphate acyltransferase from Sinorhizobium fredii (strain NBRC 101917 / NGR234).